Reading from the N-terminus, the 659-residue chain is PAN2-PAN3 deadenylation complex subunit PAN3 (659 aa).

2 disordered regions span residues 1–26 (MASAGKPALDDSRRGTGSPKMKAREN) and 103–132 (PKAANAAPFQPRSVASRSNTSTPNSRQENI). The C3H1-type zinc-finger motif lies at 26–55 (NAKDTLCRNVTIYGRCRYEDKGCAFNHDPL). Polar residues predominate over residues 115-132 (SVASRSNTSTPNSRQENI). The tract at residues 262–522 (QTLPNTQLPA…NIDIFITGIS (261 aa)) is pseudokinase domain. ATP-binding positions include arginine 314, 363-370 (DYYPLSKT), and 422-423 (SK). Positions 523–561 (SQLMSTFDSALHLDDQLTSDLSRELENGRLVRLMTKLNL) form a coiled coil. Residues 562-659 (VNERPEYEHD…ALLKPARRMH (98 aa)) form a knob domain region.

The protein belongs to the protein kinase superfamily. PAN3 family. Homodimer. Forms a heterotrimer with a catalytic subunit pan2 to form the poly(A)-nuclease (PAN) deadenylation complex. Interacts (via PAM-2 motif) with poly(A)-binding protein pab1 (via PABC domain), conferring substrate specificity of the enzyme complex.

Its subcellular location is the cytoplasm. Its function is as follows. Regulatory subunit of the poly(A)-nuclease (PAN) deadenylation complex, one of two cytoplasmic mRNA deadenylases involved in mRNA turnover. PAN specifically shortens poly(A) tails of RNA and the activity is stimulated by poly(A)-binding protein pab1. PAN deadenylation is followed by rapid degradation of the shortened mRNA tails by the CCR4-NOT complex. Deadenylated mRNAs are then degraded by two alternative mechanisms, namely exosome-mediated 3'-5' exonucleolytic degradation, or deadenylation-dependent mRNA decaping and subsequent 5'-3' exonucleolytic degradation by xrn1. May also be involved in post-transcriptional maturation of mRNA poly(A) tails. pan3 acts as a positive regulator for PAN activity, recruiting the catalytic subunit pan2 to mRNA via its interaction with RNA and with pab1. This Aspergillus clavatus (strain ATCC 1007 / CBS 513.65 / DSM 816 / NCTC 3887 / NRRL 1 / QM 1276 / 107) protein is PAN2-PAN3 deadenylation complex subunit PAN3.